The following is a 400-amino-acid chain: Phosphoglycerate kinase (400 aa).

Substrate is bound by residues 21–23 (DFN), R36, 59–62 (HLGR), R119, and R160. Residues K211, E329, and 356–359 (GGDS) each bind ATP.

The protein belongs to the phosphoglycerate kinase family. As to quaternary structure, monomer.

It is found in the cytoplasm. It carries out the reaction (2R)-3-phosphoglycerate + ATP = (2R)-3-phospho-glyceroyl phosphate + ADP. It functions in the pathway carbohydrate degradation; glycolysis; pyruvate from D-glyceraldehyde 3-phosphate: step 2/5. The chain is Phosphoglycerate kinase from Levilactobacillus brevis (strain ATCC 367 / BCRC 12310 / CIP 105137 / JCM 1170 / LMG 11437 / NCIMB 947 / NCTC 947) (Lactobacillus brevis).